Consider the following 488-residue polypeptide: Tripartite motif-containing protein 6 (488 aa).

The RING-type zinc finger occupies 15-60 (CPICLELLTEPLSIDCGHSFCQVCIIGNSNNSVFGQGGRSSCPVCR). The B box-type zinc-finger motif lies at 92–133 (LEVIFCALHGEKLQLFCKEDGKLICWLCERSQEHRGHHTFLM). 4 residues coordinate Zn(2+): Cys97, His100, Cys119, and His125. A coiled-coil region spans residues 132 to 223 (LMEEVAQEYQ…SIIEKAEGDL (92 aa)). One can recognise a B30.2/SPRY domain in the interval 282 to 488 (DLRKMLKVFR…VPMTLRRPTS (207 aa)).

It belongs to the TRIM/RBCC family. In terms of assembly, homotrimer. Forms heteromultimers (via B30.2/SPRY domain) with TRIM5. Interacts with MYC. Interacts (via SPRY domain) with IKBKE. Interacts with VAMP8; this interaction contributes to the activation of the type I interferon antiviral response. Interacts with DHX16.

Its subcellular location is the cytoplasm. It catalyses the reaction S-ubiquitinyl-[E2 ubiquitin-conjugating enzyme]-L-cysteine + [acceptor protein]-L-lysine = [E2 ubiquitin-conjugating enzyme]-L-cysteine + N(6)-ubiquitinyl-[acceptor protein]-L-lysine.. Its pathway is protein modification; protein ubiquitination. Functionally, E3 ubiquitin ligase that plays a crucial role in the activation of the IKBKE-dependent branch of the type I interferon signaling pathway. In concert with the ubiquitin-conjugating E2 enzyme UBE2K, synthesizes unanchored 'Lys-48'-linked polyubiquitin chains that promote the oligomerization and autophosphorylation of IKBKE leading to stimulation of an antiviral response. Also ubiquitinates MYC and inhibits its transcription activation activity, maintaining the pluripotency of embryonic stem cells. Promotes the association of unanchored 'Lys-48'-polyubiquitin chains with DHX16 leading to enhancement of RIGI-mediated innate antiviral immune response. The chain is Tripartite motif-containing protein 6 (Trim6) from Mus musculus (Mouse).